We begin with the raw amino-acid sequence, 280 residues long: Putative ABC transporter ATP-binding protein PYRAB03730 (280 aa).

The ABC transporter domain maps to 4 to 244 (IEVENVSFKY…VEFLERIGIR (241 aa)). Residue 38–45 (GPSGSGKS) participates in ATP binding.

Belongs to the ABC transporter superfamily.

Its subcellular location is the cell membrane. In terms of biological role, probably part of an ABC transporter complex. Responsible for energy coupling to the transport system. The polypeptide is Putative ABC transporter ATP-binding protein PYRAB03730 (Pyrococcus abyssi (strain GE5 / Orsay)).